A 1699-amino-acid polypeptide reads, in one-letter code: Eukaryotic translation initiation factor 2-alpha kinase gcn-2 (1699 aa).

The 117-residue stretch at 22–138 folds into the RWD domain; that stretch reads EEKLALDAVY…HRVREFLTDH (117 aa). Protein kinase domains lie at 108–507 and 508–999; these read LTIL…DVVL and VRNK…DEDL. ATP contacts are provided by residues 114 to 122, K154, 497 to 505, and K520; these read MADTWEGCV and LGRGGFGDV. Disordered stretches follow at residues 572-615 and 632-725; these read DSSL…SLMP and KEWS…SVFE. Acidic residues predominate over residues 669–706; the sequence is SSDDEDDDDSSEIDWDAESEEVEDEESDDSDEEDEDDG. The span at 711 to 720 shows a compositional bias: polar residues; the sequence is QLNTETSTGA. D829 functions as the Proton acceptor in the catalytic mechanism.

This sequence belongs to the protein kinase superfamily. Ser/Thr protein kinase family. GCN2 subfamily.

It catalyses the reaction L-seryl-[protein] + ATP = O-phospho-L-seryl-[protein] + ADP + H(+). The enzyme catalyses L-threonyl-[protein] + ATP = O-phospho-L-threonyl-[protein] + ADP + H(+). Serine/threonine-protein kinase which phosphorylates the alpha subunit of eukaryotic translation-initiation factor 2 (eIF2alpha), leading to its inactivation and thus to a rapid reduction of translational initiation and repression of global protein synthesis. Involved in the unfolded protein response (UPR) triggered by several stresses including mitochondrial, osmotic and oxidative stresses, amino acid deprivation and UV irradiation, probably by phosphorylating and inhibiting eIF2alpha. In addition, leads to the selective translation/transcription of some mRNA including atf-5, pha-4 and gpdh-1 which are part of the UPR. Required for maintaining lifespan during amino acid starvation. Involved in hypoxia-mediated adaptive protective response. The sequence is that of Eukaryotic translation initiation factor 2-alpha kinase gcn-2 from Caenorhabditis elegans.